A 201-amino-acid chain; its full sequence is FMN-dependent NADH:quinone oxidoreductase (201 aa).

92–95 (MWNL) contacts FMN.

This sequence belongs to the azoreductase type 1 family. In terms of assembly, homodimer. Requires FMN as cofactor.

The catalysed reaction is 2 a quinone + NADH + H(+) = 2 a 1,4-benzosemiquinone + NAD(+). It catalyses the reaction N,N-dimethyl-1,4-phenylenediamine + anthranilate + 2 NAD(+) = 2-(4-dimethylaminophenyl)diazenylbenzoate + 2 NADH + 2 H(+). Its function is as follows. Quinone reductase that provides resistance to thiol-specific stress caused by electrophilic quinones. Also exhibits azoreductase activity. Catalyzes the reductive cleavage of the azo bond in aromatic azo compounds to the corresponding amines. This is FMN-dependent NADH:quinone oxidoreductase from Caldicellulosiruptor saccharolyticus (strain ATCC 43494 / DSM 8903 / Tp8T 6331).